The following is a 288-amino-acid chain: Transmembrane and coiled-coil domain-containing protein 5A (288 aa).

Residues I13–K105 adopt a coiled-coil conformation. Residues S227–I249 traverse the membrane as a helical segment.

In terms of tissue distribution, testis-specific. Expressed in spermatogenic cells of testis but disappear by the time mature spermatozoa are formed (at protein level).

It is found in the endoplasmic reticulum membrane. The protein resides in the nucleus membrane. The polypeptide is Transmembrane and coiled-coil domain-containing protein 5A (Tmco5a) (Rattus norvegicus (Rat)).